Here is a 366-residue protein sequence, read N- to C-terminus: Probable protein arginine N-methyltransferase 1.2 (366 aa).

The SAM-dependent MTase PRMT-type domain occupies 45-347 (ADYYFDSYSH…NPRDVDIKLS (303 aa)). Active-site residues include Glu-157 and Glu-166.

It belongs to the class I-like SAM-binding methyltransferase superfamily. Protein arginine N-methyltransferase family. Interacts with FIB2 and PRMT11.

It is found in the nucleus. It localises to the cytoplasm. Its function is as follows. Methylates (mono and asymmetric dimethylation) the guanidino nitrogens of arginyl residues present in a glycine and arginine-rich domain. Type I arginine methyltransferase active on both histones and non-histone proteins. Mediates the methylation of MED36A. This Arabidopsis thaliana (Mouse-ear cress) protein is Probable protein arginine N-methyltransferase 1.2 (PRMT12).